Consider the following 167-residue polypeptide: 3-isopropylmalate dehydratase small subunit (167 aa).

Belongs to the LeuD family. LeuD type 2 subfamily. Heterodimer of LeuC and LeuD.

It carries out the reaction (2R,3S)-3-isopropylmalate = (2S)-2-isopropylmalate. The protein operates within amino-acid biosynthesis; L-leucine biosynthesis; L-leucine from 3-methyl-2-oxobutanoate: step 2/4. Catalyzes the isomerization between 2-isopropylmalate and 3-isopropylmalate, via the formation of 2-isopropylmaleate. This chain is 3-isopropylmalate dehydratase small subunit, found in Wolinella succinogenes (strain ATCC 29543 / DSM 1740 / CCUG 13145 / JCM 31913 / LMG 7466 / NCTC 11488 / FDC 602W) (Vibrio succinogenes).